We begin with the raw amino-acid sequence, 313 residues long: Endo-beta-N-acetylglucosaminidase H (313 aa).

Residues 1–42 (MFTPVRRRVRTAALALSAAAALVLGSTAASGASATPSPAPAP) constitute a signal peptide (or 44). A GH18 domain is found at 51-307 (PTSVAYVEVN…SAFTRELYGS (257 aa)). The Proton donor role is filled by Glu-174.

Belongs to the glycosyl hydrolase 18 family.

The enzyme catalyses an N(4)-(oligosaccharide-(1-&gt;3)-[oligosaccharide-(1-&gt;6)]-beta-D-Man-(1-&gt;4)-beta-D-GlcNAc-(1-&gt;4)-alpha-D-GlcNAc)-L-asparaginyl-[protein] + H2O = an oligosaccharide-(1-&gt;3)-[oligosaccharide-(1-&gt;6)]-beta-D-Man-(1-&gt;4)-D-GlcNAc + N(4)-(N-acetyl-beta-D-glucosaminyl)-L-asparaginyl-[protein]. Cleaves asparagine-linked oligomannose and hybrid, but not complex, oligosaccharides from glycoproteins. In Streptomyces plicatus, this protein is Endo-beta-N-acetylglucosaminidase H.